A 205-amino-acid chain; its full sequence is MDKLLIAADNALRTLFARPRAAQPSPARGLPEGDLSPAQRREAGALMRVNHVGEVCAQALYMGQAAVTRDPALRARLMEAAREETDHLAWTAERLQALGSRPSLLNPLWFAGAFAIGWTAAQVSDAASLGFVVETENQVARHLQGHLERMPPQDAASLAVIERMQADEQRHADDARAAGASDLPAPARVLMAAAARVMTATAHHI.

The Fe cation site is built by Glu54, Glu84, His87, Glu136, Glu168, and His171.

This sequence belongs to the COQ7 family. The cofactor is Fe cation.

It localises to the cell membrane. The catalysed reaction is a 5-methoxy-2-methyl-3-(all-trans-polyprenyl)benzene-1,4-diol + AH2 + O2 = a 3-demethylubiquinol + A + H2O. It participates in cofactor biosynthesis; ubiquinone biosynthesis. Functionally, catalyzes the hydroxylation of 2-nonaprenyl-3-methyl-6-methoxy-1,4-benzoquinol during ubiquinone biosynthesis. The protein is 3-demethoxyubiquinol 3-hydroxylase of Paracidovorax citrulli (strain AAC00-1) (Acidovorax citrulli).